The following is a 207-amino-acid chain: Cytochrome c biogenesis ATP-binding export protein CcmA (207 aa).

Positions 3–206 constitute an ABC transporter domain; the sequence is LMAEGLSARR…AKSLEMTGFV (204 aa). 35–42 serves as a coordination point for ATP; it reads GPNGAGKS.

This sequence belongs to the ABC transporter superfamily. CcmA exporter (TC 3.A.1.107) family. The complex is composed of two ATP-binding proteins (CcmA) and two transmembrane proteins (CcmB).

It is found in the cell inner membrane. The catalysed reaction is heme b(in) + ATP + H2O = heme b(out) + ADP + phosphate + H(+). Functionally, part of the ABC transporter complex CcmAB involved in the biogenesis of c-type cytochromes; once thought to export heme, this seems not to be the case, but its exact role is uncertain. Responsible for energy coupling to the transport system. The sequence is that of Cytochrome c biogenesis ATP-binding export protein CcmA from Rhizobium meliloti (strain 1021) (Ensifer meliloti).